The primary structure comprises 121 residues: Large ribosomal subunit protein bL12 (121 aa).

It belongs to the bacterial ribosomal protein bL12 family. In terms of assembly, homodimer. Part of the ribosomal stalk of the 50S ribosomal subunit. Forms a multimeric L10(L12)X complex, where L10 forms an elongated spine to which 2 to 4 L12 dimers bind in a sequential fashion. Binds GTP-bound translation factors.

In terms of biological role, forms part of the ribosomal stalk which helps the ribosome interact with GTP-bound translation factors. Is thus essential for accurate translation. This chain is Large ribosomal subunit protein bL12, found in Shigella sonnei (strain Ss046).